Reading from the N-terminus, the 292-residue chain is Protease HtpX (292 aa).

The next 2 helical transmembrane spans lie at 5 to 25 and 34 to 54; these read IFLFLLTNVAVLMLAGVVMSV and SGLLVMAAIFGFGGSFISLLL. Histidine 140 contributes to the Zn(2+) binding site. The active site involves glutamate 141. Histidine 144 contributes to the Zn(2+) binding site. 2 consecutive transmembrane segments (helical) span residues 155-175 and 193-213; these read LLQGVLNTFVIVLARVVGGII and IIVFVLEMVFGMFATMIAMWF. Position 218 (glutamate 218) interacts with Zn(2+).

This sequence belongs to the peptidase M48B family. Zn(2+) serves as cofactor.

It is found in the cell inner membrane. The sequence is that of Protease HtpX from Xanthomonas oryzae pv. oryzae (strain MAFF 311018).